The following is a 178-amino-acid chain: Peptidyl-prolyl cis-trans isomerase (178 aa).

A signal peptide spans 1-17 (MKLLFFFLVLAVSAAVA). Residues 26–177 (FMDIEIDGES…KIAKITDIGL (152 aa)) form the PPIase cyclophilin-type domain.

The protein belongs to the cyclophilin-type PPIase family. PPIase A subfamily.

It catalyses the reaction [protein]-peptidylproline (omega=180) = [protein]-peptidylproline (omega=0). Functionally, PPIases accelerate the folding of proteins. It catalyzes the cis-trans isomerization of proline imidic peptide bonds in oligopeptides. Up-regulates interferon gamma production by bovine T-cells. Stimulates high levels of IFN-gamma production by peripheral blood mononuclear cells and T-cells. The IFN-gamma-inducing effect is blocked by cyclosporin A (CsA). This Neospora caninum (Coccidian parasite) protein is Peptidyl-prolyl cis-trans isomerase.